The following is a 633-amino-acid chain: Biosynthetic arginine decarboxylase (633 aa).

An N6-(pyridoxal phosphate)lysine modification is found at Lys101. 284 to 294 serves as a coordination point for substrate; sequence VDVGGGLGVDY.

The protein belongs to the Orn/Lys/Arg decarboxylase class-II family. SpeA subfamily. Requires Mg(2+) as cofactor. It depends on pyridoxal 5'-phosphate as a cofactor.

The catalysed reaction is L-arginine + H(+) = agmatine + CO2. The protein operates within amine and polyamine biosynthesis; agmatine biosynthesis; agmatine from L-arginine: step 1/1. Catalyzes the biosynthesis of agmatine from arginine. The chain is Biosynthetic arginine decarboxylase from Aeromonas salmonicida (strain A449).